We begin with the raw amino-acid sequence, 618 residues long: Dihydroxy-acid dehydratase (618 aa).

A Mg(2+)-binding site is contributed by Asp81. Cys122 contacts [2Fe-2S] cluster. Mg(2+) is bound by residues Asp123 and Lys124. Lys124 carries the N6-carboxylysine modification. Cys195 provides a ligand contact to [2Fe-2S] cluster. Position 491 (Glu491) interacts with Mg(2+). Ser517 serves as the catalytic Proton acceptor.

This sequence belongs to the IlvD/Edd family. As to quaternary structure, homodimer. [2Fe-2S] cluster serves as cofactor. Mg(2+) is required as a cofactor.

It carries out the reaction (2R)-2,3-dihydroxy-3-methylbutanoate = 3-methyl-2-oxobutanoate + H2O. The catalysed reaction is (2R,3R)-2,3-dihydroxy-3-methylpentanoate = (S)-3-methyl-2-oxopentanoate + H2O. It functions in the pathway amino-acid biosynthesis; L-isoleucine biosynthesis; L-isoleucine from 2-oxobutanoate: step 3/4. The protein operates within amino-acid biosynthesis; L-valine biosynthesis; L-valine from pyruvate: step 3/4. Functions in the biosynthesis of branched-chain amino acids. Catalyzes the dehydration of (2R,3R)-2,3-dihydroxy-3-methylpentanoate (2,3-dihydroxy-3-methylvalerate) into 2-oxo-3-methylpentanoate (2-oxo-3-methylvalerate) and of (2R)-2,3-dihydroxy-3-methylbutanoate (2,3-dihydroxyisovalerate) into 2-oxo-3-methylbutanoate (2-oxoisovalerate), the penultimate precursor to L-isoleucine and L-valine, respectively. This Rhodopseudomonas palustris (strain ATCC BAA-98 / CGA009) protein is Dihydroxy-acid dehydratase.